The following is a 397-amino-acid chain: Ribosomal RNA large subunit methyltransferase I (397 aa).

The PUA domain occupies 2–81 (SAQVILQPSR…ESIDNGFFLR (80 aa)).

The protein belongs to the methyltransferase superfamily. RlmI family.

It is found in the cytoplasm. It catalyses the reaction cytidine(1962) in 23S rRNA + S-adenosyl-L-methionine = 5-methylcytidine(1962) in 23S rRNA + S-adenosyl-L-homocysteine + H(+). Its function is as follows. Specifically methylates the cytosine at position 1962 (m5C1962) of 23S rRNA. This is Ribosomal RNA large subunit methyltransferase I from Alteromonas mediterranea (strain DSM 17117 / CIP 110805 / LMG 28347 / Deep ecotype).